The following is a 130-amino-acid chain: Small ribosomal subunit protein uS8 (130 aa).

Belongs to the universal ribosomal protein uS8 family. As to quaternary structure, part of the 30S ribosomal subunit. Contacts proteins S5 and S12.

Functionally, one of the primary rRNA binding proteins, it binds directly to 16S rRNA central domain where it helps coordinate assembly of the platform of the 30S subunit. This is Small ribosomal subunit protein uS8 from Glaesserella parasuis serovar 5 (strain SH0165) (Haemophilus parasuis).